The primary structure comprises 257 residues: Acetylglutamate kinase (257 aa).

Substrate contacts are provided by residues Gly40 to Gly41, Arg62, and Asn155.

The protein belongs to the acetylglutamate kinase family. ArgB subfamily.

Its subcellular location is the cytoplasm. The enzyme catalyses N-acetyl-L-glutamate + ATP = N-acetyl-L-glutamyl 5-phosphate + ADP. The protein operates within amino-acid biosynthesis; L-arginine biosynthesis; N(2)-acetyl-L-ornithine from L-glutamate: step 2/4. Functionally, catalyzes the ATP-dependent phosphorylation of N-acetyl-L-glutamate. This chain is Acetylglutamate kinase, found in Shouchella clausii (strain KSM-K16) (Alkalihalobacillus clausii).